The chain runs to 372 residues: Riboflavin biosynthesis protein RibD (372 aa).

The CMP/dCMP-type deaminase domain occupies 1-122 (MKDIFYMKKA…KWLKKHGILV (122 aa)). The segment at 1–145 (MKDIFYMKKA…KGFFQRMTTG (145 aa)) is deaminase. Histidine 50 is a Zn(2+) binding site. The Proton donor role is filled by glutamate 52. Zn(2+)-binding residues include cysteine 75 and cysteine 84. The tract at residues 146-372 (IPWIKLKLAS…KLILTKHNSS (227 aa)) is reductase. Alanine 154 serves as a coordination point for NADP(+). Substrate is bound at residue serine 168. Tryptophan 170 serves as a coordination point for NADP(+). Residue arginine 184 participates in substrate binding. NADP(+) contacts are provided by threonine 196 and aspartate 200. Residues leucine 204 and arginine 207 each coordinate substrate. Residue serine 236 coordinates NADP(+). A substrate-binding site is contributed by glutamate 301. Residue 303–309 (GPSLSSS) participates in NADP(+) binding.

It in the N-terminal section; belongs to the cytidine and deoxycytidylate deaminase family. In the C-terminal section; belongs to the HTP reductase family. Requires Zn(2+) as cofactor.

It catalyses the reaction 2,5-diamino-6-hydroxy-4-(5-phosphoribosylamino)-pyrimidine + H2O + H(+) = 5-amino-6-(5-phospho-D-ribosylamino)uracil + NH4(+). The catalysed reaction is 5-amino-6-(5-phospho-D-ribitylamino)uracil + NADP(+) = 5-amino-6-(5-phospho-D-ribosylamino)uracil + NADPH + H(+). It participates in cofactor biosynthesis; riboflavin biosynthesis; 5-amino-6-(D-ribitylamino)uracil from GTP: step 2/4. It functions in the pathway cofactor biosynthesis; riboflavin biosynthesis; 5-amino-6-(D-ribitylamino)uracil from GTP: step 3/4. In terms of biological role, converts 2,5-diamino-6-(ribosylamino)-4(3h)-pyrimidinone 5'-phosphate into 5-amino-6-(ribosylamino)-2,4(1h,3h)-pyrimidinedione 5'-phosphate. This is Riboflavin biosynthesis protein RibD (ribD) from Buchnera aphidicola subsp. Baizongia pistaciae (strain Bp).